Reading from the N-terminus, the 611-residue chain is UvrABC system protein C (611 aa).

The region spanning 12 to 96 (DQPGIYQYFD…IKQLKPKYNI (85 aa)) is the GIY-YIG domain. In terms of domain architecture, UVR spans 202 to 237 (EKILEILNQKMQKYAENLQFEEAAEIRDRIKSIESA).

The protein belongs to the UvrC family. As to quaternary structure, interacts with UvrB in an incision complex.

Its subcellular location is the cytoplasm. The UvrABC repair system catalyzes the recognition and processing of DNA lesions. UvrC both incises the 5' and 3' sides of the lesion. The N-terminal half is responsible for the 3' incision and the C-terminal half is responsible for the 5' incision. The protein is UvrABC system protein C of Nautilia profundicola (strain ATCC BAA-1463 / DSM 18972 / AmH).